A 271-amino-acid chain; its full sequence is Phosphatidylinositol transfer protein beta isoform (271 aa).

Lysine 215 bears the N6-acetyllysine mark. Serine 262 is modified (phosphoserine).

It belongs to the PtdIns transfer protein family. PI transfer class I subfamily. Post-translationally, constitutive phosphorylation of Ser-262 has no effect on phospholipid transfer activity but is required for Golgi targeting. Expressed abundantly in brain, kidney, liver, and lung, but in a lesser amount in testis.

The protein localises to the golgi apparatus. Its subcellular location is the golgi apparatus membrane. It localises to the endoplasmic reticulum membrane. The catalysed reaction is a 1,2-diacyl-sn-glycero-3-phosphocholine(in) = a 1,2-diacyl-sn-glycero-3-phosphocholine(out). The enzyme catalyses a 1,2-diacyl-sn-glycero-3-phospho-(1D-myo-inositol)(in) = a 1,2-diacyl-sn-glycero-3-phospho-(1D-myo-inositol)(out). It catalyses the reaction an N-(acyl)-sphingosylphosphocholine(in) = an N-(acyl)-sphingosylphosphocholine(out). Its activity is regulated as follows. Phosphatidylinositol transfer activity is inhibited by N-ethylmaleimide. Catalyzes the transfer of phosphatidylinositol between membranes. Also catalyzes the transfer of phosphatidylcholine and sphingomyelin between membranes. Required for COPI-mediated retrograde transport from the Golgi to the endoplasmic reticulum; phosphatidylinositol and phosphatidylcholine transfer activity is essential for this function. This chain is Phosphatidylinositol transfer protein beta isoform (Pitpnb), found in Rattus norvegicus (Rat).